Consider the following 872-residue polypeptide: DNA polymerase 1 (872 aa).

It belongs to the DNA polymerase type-B family.

The enzyme catalyses DNA(n) + a 2'-deoxyribonucleoside 5'-triphosphate = DNA(n+1) + diphosphate. The chain is DNA polymerase 1 (pol-alpha) from Sulfurisphaera ohwakuensis.